A 323-amino-acid polypeptide reads, in one-letter code: Ethanolamine-phosphate cytidylyltransferase (323 aa).

It belongs to the cytidylyltransferase family.

It localises to the cytoplasm. Its subcellular location is the nucleus. It catalyses the reaction phosphoethanolamine + CTP + H(+) = CDP-ethanolamine + diphosphate. Its pathway is phospholipid metabolism; phosphatidylethanolamine biosynthesis; phosphatidylethanolamine from ethanolamine: step 2/3. Ethanolamine-phosphate cytidylyltransferase which catalyzes the second step of phosphatidylethanolamine biosynthesis. Involved in the maintenance of plasma membrane and required for proper sporulation. This Saccharomyces cerevisiae (strain ATCC 204508 / S288c) (Baker's yeast) protein is Ethanolamine-phosphate cytidylyltransferase.